Reading from the N-terminus, the 91-residue chain is Probable Fe(2+)-trafficking protein (91 aa).

It belongs to the Fe(2+)-trafficking protein family.

Could be a mediator in iron transactions between iron acquisition and iron-requiring processes, such as synthesis and/or repair of Fe-S clusters in biosynthetic enzymes. In Burkholderia cenocepacia (strain ATCC BAA-245 / DSM 16553 / LMG 16656 / NCTC 13227 / J2315 / CF5610) (Burkholderia cepacia (strain J2315)), this protein is Probable Fe(2+)-trafficking protein.